An 863-amino-acid chain; its full sequence is KFIGRVNLKECFKSATLIHSSDPDFQILEDGSVYTTHAILLSSEKSSFTILLSNTETQEEKEILVLLEHQTKVLKKRHSQEKVLRRAKRRWAPIPCSVPENSLGPFPLFLQQIQSDTAQNYTIYYSISGPGVDKEPRNLFYVERDTGNLFCTASIDRETYPLFELVAFATTPDGYTPEYPLTLVIRIEDENDNAPIFTETSYSFEVFENSKVGTTVGQVCATDQDEPDTLHTRLKYSIIEQFPALPTLFSMHPTTGVITTSSSKLDRELIDKYQLKIKVQDMDGQYFGLQTTAICIINIEDVNDNLPTFTRSSYVASVEENRIDVEILRVAVRDKDLINTANWRANYTILKGNEDGNFKIVTDSQTNEGVLCVVKPLNYEEKQQVTLEIGVVNEAPYTGTSRSTTNMATVTVNVQNQDEGPECDPRVQTVRIKENVPVGTKTIGYKAYDPETGSSSGIRYKKSSDPEGWVDVDKNSGVITILKRLDREARSGVYNISIIASDKDGRTCNGVLGIVLEDVNDNGPVIPQRTVVICKTVMSSAEIVAVDPDEPIHGPPFDFSLEGVSDSEVLRMWRLTKVNDTAARLSYLNDLRFGKYTVPVRVTDRLGQSLVTQLVVILCDCVTPNDCSFRPVSRTGNREVILGKWAILAILLGIALLFCILFTLVCGATTGADKKPKVFPDDLAQQNLIVSNTEAPGDDKVYSTNDFTTHAVGGSAHGIGGTLGSRVKNGGQETIEMVKGGHQTMESCQETGHDHTLERCKEGGQHTLDSCRGGPVATDNCKYTYSEWYTYTQPRLGEKVQQCDQDNTHMQAQDYVLTYNYEGRGSAAGSVGCCSERQEEDGLEFLDHLGPKFRTLAETCMKR.

The propeptide occupies 1-89 (KFIGRVNLKE…QEKVLRRAKR (89 aa)). 5 Cadherin domains span residues 90–197 (RWAP…APIF), 198–309 (TETS…LPTF), 310–423 (TRSS…GPEC), 424–528 (DPRV…VIPQ), and 529–644 (RTVV…ILGK). Residues 90 to 644 (RWAPIPCSVP…TGNREVILGK (555 aa)) are Extracellular-facing. A glycan (N-linked (GlcNAc...) asparagine) is linked at Asn120. Residues Asn346, Asn495, and Asn579 are each glycosylated (N-linked (GlcNAc...) asparagine). The helical transmembrane segment at 645–665 (WAILAILLGIALLFCILFTLV) threads the bilayer. The Cytoplasmic segment spans residues 666–863 (CGATTGADKK…RTLAETCMKR (198 aa)). A phosphoserine mark is found at Ser826, Ser830, and Ser835.

In terms of assembly, interacts with DSP, PKP2 and JUP. Interacts with DSG3; the interaction may limit the interaction of DSC3 with p38MAPK family members and therefore repress p38MAPK signaling activation. As to expression, expressed in esophagus and rumen. Weakly expressed in epithelia and cardiac muscle.

The protein resides in the cell membrane. It is found in the cell junction. Its subcellular location is the desmosome. A component of desmosome cell-cell junctions which are required for positive regulation of cellular adhesion. Promotes timely incorporation of DSG2 into desmosome intercellular junctions and promotes interaction of desmosome cell junctions with intermediate filament cytokeratin, via modulation of DSP phosphorylation. Plays an important role in desmosome-mediated maintenance of intestinal epithelial cell intercellular adhesion strength and barrier function. Positively regulates wound healing of intestinal mucosa via promotion of epithelial cell migration, and also plays a role in mechanotransduction of force between intestinal epithelial cells and extracellular matrix. May contribute to epidermal cell positioning (stratification) by mediating differential adhesiveness between cells that express different isoforms. The sequence is that of Desmocollin-2 (DSC2) from Bos taurus (Bovine).